Reading from the N-terminus, the 297-residue chain is L-threonate dehydrogenase (297 aa).

NAD(+) contacts are provided by residues Arg-3–Cys-31 and Thr-97. Lys-173 is a catalytic residue. Position 241 (Lys-241) interacts with NAD(+).

This sequence belongs to the HIBADH-related family. L-threonate dehydrogenase subfamily.

The enzyme catalyses L-threonate + NAD(+) = 2-dehydro-L-erythronate + NADH + H(+). Its function is as follows. Catalyzes oxidation of L-threonate to 2-oxo-tetronate. Can use either NAD(+) or NADP(+) as cosubstrate, with a preference for NAD(+). The polypeptide is L-threonate dehydrogenase (Cupriavidus necator (strain ATCC 17699 / DSM 428 / KCTC 22496 / NCIMB 10442 / H16 / Stanier 337) (Ralstonia eutropha)).